Consider the following 242-residue polypeptide: Pyridoxine 5'-phosphate synthase (242 aa).

Asparagine 9 is a 3-amino-2-oxopropyl phosphate binding site. 11 to 12 (DH) serves as a coordination point for 1-deoxy-D-xylulose 5-phosphate. Position 20 (arginine 20) interacts with 3-amino-2-oxopropyl phosphate. The Proton acceptor role is filled by histidine 45. 2 residues coordinate 1-deoxy-D-xylulose 5-phosphate: arginine 47 and histidine 52. Glutamate 72 serves as the catalytic Proton acceptor. Threonine 102 provides a ligand contact to 1-deoxy-D-xylulose 5-phosphate. The Proton donor role is filled by histidine 193. Residues glycine 194 and 215-216 (GH) each bind 3-amino-2-oxopropyl phosphate.

The protein belongs to the PNP synthase family. As to quaternary structure, homooctamer; tetramer of dimers.

The protein resides in the cytoplasm. The catalysed reaction is 3-amino-2-oxopropyl phosphate + 1-deoxy-D-xylulose 5-phosphate = pyridoxine 5'-phosphate + phosphate + 2 H2O + H(+). The protein operates within cofactor biosynthesis; pyridoxine 5'-phosphate biosynthesis; pyridoxine 5'-phosphate from D-erythrose 4-phosphate: step 5/5. Its function is as follows. Catalyzes the complicated ring closure reaction between the two acyclic compounds 1-deoxy-D-xylulose-5-phosphate (DXP) and 3-amino-2-oxopropyl phosphate (1-amino-acetone-3-phosphate or AAP) to form pyridoxine 5'-phosphate (PNP) and inorganic phosphate. This chain is Pyridoxine 5'-phosphate synthase, found in Idiomarina loihiensis (strain ATCC BAA-735 / DSM 15497 / L2-TR).